The following is a 108-amino-acid chain: uncharacterized protein (108 aa).

Positions 1 to 14 (MSDSNSRLVYSTET) are enriched in polar residues. The interval 1–31 (MSDSNSRLVYSTETGRIDEPKAAPVRPKGDG) is disordered. The span at 15-31 (GRIDEPKAAPVRPKGDG) shows a compositional bias: basic and acidic residues.

Belongs to the SUI1 family.

This is an uncharacterized protein from Escherichia coli (strain K12).